The following is a 134-amino-acid chain: DNA-binding protein inhibitor ID-2 (134 aa).

Ser-14 and Ser-25 each carry phosphoserine. A bHLH domain is found at 23–75 (SRSKTPVDDPMSLLYNMNDCYSKLKELVPSIPQNKKVTKMEILQHVIDYILDL). The segment at 30-83 (DDPMSLLYNMNDCYSKLKELVPSIPQNKKVTKMEILQHVIDYILDLQIALDSHP) is interaction with IFI204. Residues 106–115 (LNTDISILSL) carry the Nuclear export signal motif.

As to quaternary structure, interacts with GATA4 and NKX2-5. Interacts with NR0B2. Interacts with CLOCK and BMAL1. Interacts with IFI204. Interacts with NEDD9/HEF1. Interacts with ASB4; this interaction promotes ID2 proteasomal degradation. Post-translationally, polyubiquitinated; which is favored by Ifi204 and leads to proteasomal degradation. Ubiquitinated in a ASB4-depedent manner, leading to proteasomal degradation. Phosphorylated in vitro by CDK1, PKA and PKC.

Its subcellular location is the cytoplasm. The protein resides in the nucleus. In terms of biological role, transcriptional regulator (lacking a basic DNA binding domain) which negatively regulates the basic helix-loop-helix (bHLH) transcription factors by forming heterodimers and inhibiting their DNA binding and transcriptional activity. Implicated in regulating a variety of cellular processes, including cellular growth, senescence, differentiation, apoptosis, angiogenesis, and neoplastic transformation. Inhibits skeletal muscle and cardiac myocyte differentiation. Regulates the circadian clock by repressing the transcriptional activator activity of the CLOCK-BMAL1 heterodimer. Restricts the CLOCK and BMAL1 localization to the cytoplasm. Plays a role in both the input and output pathways of the circadian clock: in the input component, is involved in modulating the magnitude of photic entrainment and in the output component, contributes to the regulation of a variety of liver clock-controlled genes involved in lipid metabolism. The protein is DNA-binding protein inhibitor ID-2 (Id2) of Mus musculus (Mouse).